The following is a 258-amino-acid chain: Chemokine-binding protein (258 aa).

An N-terminal signal peptide occupies residues 1 to 17; the sequence is MKQYIVLACMCLAAAAM. Residues 65–93 are disordered; the sequence is TEITESESDPDPEVESEDDSTSVEDVDPP. A compositionally biased stretch (acidic residues) spans 68-91; that stretch reads TESESDPDPEVESEDDSTSVEDVD.

Belongs to the orthopoxvirus OPG001 family. In terms of assembly, binds to host CC chemokines, such as RANTES/CCL5, MIP-1alpha/CCL3, MCP-1/CCL2 and eotaxin.

It localises to the secreted. In terms of biological role, inhibits host immune defense by binding to host chemokines. Binds host CC chemokines (beta chemokines) such as RANTES with high affinity, but not CXC or C chemokines (alpha and gamma chemokines). This chain is Chemokine-binding protein (OPG001), found in Homo sapiens (Human).